A 74-amino-acid polypeptide reads, in one-letter code: uncharacterized protein (74 aa).

Positions 55–74 (DENSESESKDGASWFKVYRG) are disordered.

This is an uncharacterized protein from Listeria innocua serovar 6a (strain ATCC BAA-680 / CLIP 11262).